Consider the following 104-residue polypeptide: MLRKAFVMSVFPDCHDDYQRRHNPIWPELAEVLKNHGAHHYSIFLDKQRNLLFGYVEVESEARWEAIAQTEVCQRWWKYMSDVMPSNPDNSPVSEALEPVFYLD.

Tyrosine 18 provides a ligand contact to substrate. The Proton donor role is filled by histidine 22. Substrate contacts are provided by residues tyrosine 41 and 76-77 (WW).

The protein belongs to the rhamnose mutarotase family. Homodimer.

The protein localises to the cytoplasm. It catalyses the reaction alpha-L-rhamnose = beta-L-rhamnose. It participates in carbohydrate metabolism; L-rhamnose metabolism. Functionally, involved in the anomeric conversion of L-rhamnose. This is L-rhamnose mutarotase from Pectobacterium carotovorum subsp. carotovorum (strain PC1).